The primary structure comprises 222 residues: Germin-like protein subfamily 1 member 4 (222 aa).

A signal peptide spans 1 to 24 (MEGLLQFLLAKIILLALASSFVYC). Residues cysteine 34 and cysteine 50 are joined by a disulfide bond. N-linked (GlcNAc...) asparagine glycosylation is present at asparagine 38. The Cupin type-1 domain occupies 64 to 215 (SGLNVPGNTI…AFALDYNKVK (152 aa)). Residues histidine 112 and histidine 114 each contribute to the Mn(2+) site. N-linked (GlcNAc...) asparagine glycosylation occurs at asparagine 139. A Mn(2+)-binding site is contributed by histidine 161.

This sequence belongs to the germin family. As to quaternary structure, oligomer (believed to be a pentamer but probably hexamer).

It is found in the secreted. Its subcellular location is the extracellular space. The protein resides in the apoplast. Functionally, may play a role in plant defense. Probably has no oxalate oxidase activity even if the active site is conserved. The sequence is that of Germin-like protein subfamily 1 member 4 from Arabidopsis thaliana (Mouse-ear cress).